Reading from the N-terminus, the 431-residue chain is Serine/threonine-protein kinase Sgk1 (431 aa).

The tract at residues 1-60 (MTVKAEAARSTLTYSRMRGMVAILIAFMKQRRMGLNDFIQKIASNTYACKHAEVQSILKM) is necessary for localization to the mitochondria. Residues 65–92 (EPELMNANPSPPPSPSQQINLGPSSNPH) form a disordered region. Residue Ser74 is modified to Phosphoserine. Ser78 carries the post-translational modification Phosphoserine; by MAPK7. Residues 81–91 (QQINLGPSSNP) show a composition bias toward polar residues. The Protein kinase domain occupies 98-355 (FHFLKVIGKG…FMEIKSHIFF (258 aa)). ATP contacts are provided by residues 104 to 112 (IGKGSFGKV) and Lys127. The Nuclear localization signal signature appears at 131–141 (KKAILKKKEEK). Asp222 functions as the Proton acceptor in the catalytic mechanism. Residue Thr256 is modified to Phosphothreonine; by PDPK1. Residues 356-431 (SLINWDDLIN…SYAPPVDSFL (76 aa)) form the AGC-kinase C-terminal domain. Thr369 carries the post-translational modification Phosphothreonine; by PKA. A phosphoserine mark is found at Ser397, Ser401, and Ser422.

The protein belongs to the protein kinase superfamily. AGC Ser/Thr protein kinase family. As to quaternary structure, homodimer; disulfide-linked. Interacts with MAPK3/ERK1, MAPK1/ERK2, MAP2K1/MEK1, MAP2K2/MEK2, NEDD4, NEDD4L, MAPT/TAU, MAPK7, CREB1, SLC9A3R2/NHERF2 and KCNJ1/ROMK1. Forms a trimeric complex with FBXW7 and NOTCH1 Associates with the mammalian target of rapamycin complex 2 (mTORC2) via an interaction with MAPKAP1/SIN1. Post-translationally, regulated by phosphorylation. Activated by phosphorylation on Ser-422 by mTORC2, transforming it into a substrate for PDPK1 which phosphorylates it on Thr-256. Phosphorylation on Ser-397 and Ser-401 are also essential for its activity. Phosphorylation on Ser-78 by MAPK7 is required for growth factor-induced cell cycle progression. In terms of processing, ubiquitinated by NEDD4L; which promotes proteasomal degradation. Ubiquitinated by SYVN1 at the endoplasmic reticulum; which promotes rapid proteasomal degradation and maintains a high turnover rate in resting cells.

The protein resides in the cytoplasm. It localises to the nucleus. It is found in the endoplasmic reticulum membrane. The protein localises to the cell membrane. Its subcellular location is the mitochondrion. It catalyses the reaction L-seryl-[protein] + ATP = O-phospho-L-seryl-[protein] + ADP + H(+). The enzyme catalyses L-threonyl-[protein] + ATP = O-phospho-L-threonyl-[protein] + ADP + H(+). Its activity is regulated as follows. Two specific sites, one in the kinase domain (Thr-256) and the other in the C-terminal regulatory region (Ser-422), need to be phosphorylated for its full activation. Phosphorylation at Ser-397 and Ser-401 are also essential for its activity. Activated by WNK1, WNK2, WNK3 and WNK4; which promote phosphorylation by mTORC2. Serine/threonine-protein kinase which is involved in the regulation of a wide variety of ion channels, membrane transporters, cellular enzymes, transcription factors, neuronal excitability, cell growth, proliferation, survival, migration and apoptosis. Plays an important role in cellular stress response. Contributes to regulation of renal Na(+) retention, renal K(+) elimination, salt appetite, gastric acid secretion, intestinal Na(+)/H(+) exchange and nutrient transport, insulin-dependent salt sensitivity of blood pressure, salt sensitivity of peripheral glucose uptake, cardiac repolarization and memory consolidation. Up-regulates Na(+) channels: SCNN1A/ENAC, SCN5A and ASIC1/ACCN2, K(+) channels: KCNJ1/ROMK1, KCNA1-5, KCNQ1-5 and KCNE1, epithelial Ca(2+) channels: TRPV5 and TRPV6, chloride channels: BSND, CLCN2 and CFTR, glutamate transporters: SLC1A3/EAAT1, SLC1A2 /EAAT2, SLC1A1/EAAT3, SLC1A6/EAAT4 and SLC1A7/EAAT5, amino acid transporters: SLC1A5/ASCT2, SLC38A1/SN1 and SLC6A19, creatine transporter: SLC6A8, Na(+)/dicarboxylate cotransporter: SLC13A2/NADC1, Na(+)-dependent phosphate cotransporter: SLC34A2/NAPI-2B, glutamate receptor: GRIK2/GLUR6. Up-regulates carriers: SLC9A3/NHE3, SLC12A1/NKCC2, SLC12A3/NCC, SLC5A3/SMIT, SLC2A1/GLUT1, SLC5A1/SGLT1 and SLC15A2/PEPT2. Regulates enzymes: GSK3A/B, PMM2 and Na(+)/K(+) ATPase, and transcription factors: CTNNB1 and nuclear factor NF-kappa-B. Stimulates sodium transport into epithelial cells by enhancing the stability and expression of SCNN1A/ENAC. This is achieved by phosphorylating the NEDD4L ubiquitin E3 ligase, promoting its interaction with 14-3-3 proteins, thereby preventing it from binding to SCNN1A/ENAC and targeting it for degradation. Regulates store-operated Ca(+2) entry (SOCE) by stimulating ORAI1 and STIM1. Regulates KCNJ1/ROMK1 directly via its phosphorylation or indirectly via increased interaction with SLC9A3R2/NHERF2. Phosphorylates MDM2 and activates MDM2-dependent ubiquitination of p53/TP53. Phosphorylates MAPT/TAU and mediates microtubule depolymerization and neurite formation in hippocampal neurons. Phosphorylates SLC2A4/GLUT4 and up-regulates its activity. Phosphorylates APBB1/FE65 and promotes its localization to the nucleus. Phosphorylates MAPK1/ERK2 and activates it by enhancing its interaction with MAP2K1/MEK1 and MAP2K2/MEK2. Phosphorylates FBXW7 and plays an inhibitory role in the NOTCH1 signaling. Phosphorylates FOXO1 resulting in its relocalization from the nucleus to the cytoplasm. Phosphorylates FOXO3, promoting its exit from the nucleus and interference with FOXO3-dependent transcription. Phosphorylates BRAF and MAP3K3/MEKK3 and inhibits their activity. Phosphorylates SLC9A3/NHE3 in response to dexamethasone, resulting in its activation and increased localization at the cell membrane. Phosphorylates CREB1. Necessary for vascular remodeling during angiogenesis. The polypeptide is Serine/threonine-protein kinase Sgk1 (Sgk1) (Mus musculus (Mouse)).